The sequence spans 385 residues: DNA replication and repair protein RecF (385 aa).

30–37 (GPNGNGKT) provides a ligand contact to ATP.

This sequence belongs to the RecF family.

It is found in the cytoplasm. Its function is as follows. The RecF protein is involved in DNA metabolism; it is required for DNA replication and normal SOS inducibility. RecF binds preferentially to single-stranded, linear DNA. It also seems to bind ATP. The polypeptide is DNA replication and repair protein RecF (Mycobacterium leprae (strain Br4923)).